A 204-amino-acid chain; its full sequence is Nucleoside triphosphate pyrophosphatase (204 aa).

The Proton acceptor role is filled by Asp78.

This sequence belongs to the Maf family. It depends on a divalent metal cation as a cofactor.

The protein resides in the cytoplasm. It carries out the reaction a ribonucleoside 5'-triphosphate + H2O = a ribonucleoside 5'-phosphate + diphosphate + H(+). The enzyme catalyses a 2'-deoxyribonucleoside 5'-triphosphate + H2O = a 2'-deoxyribonucleoside 5'-phosphate + diphosphate + H(+). Its function is as follows. Nucleoside triphosphate pyrophosphatase. May have a dual role in cell division arrest and in preventing the incorporation of modified nucleotides into cellular nucleic acids. In Prochlorococcus marinus (strain MIT 9215), this protein is Nucleoside triphosphate pyrophosphatase.